Here is a 375-residue protein sequence, read N- to C-terminus: Alcohol dehydrogenase 1 (375 aa).

Serine 2 carries the N-acetylserine modification. 7 residues coordinate Zn(2+): cysteine 47, histidine 68, cysteine 98, cysteine 101, cysteine 104, cysteine 112, and cysteine 175. Residues 200–205 (WSGRVG), aspartate 224, and lysine 229 contribute to the NAD(+) site. Lysine 234 is modified (N6-succinyllysine). 293 to 295 (VGV) contacts NAD(+). Lysine 340 is subject to N6-succinyllysine. Arginine 370 is an NAD(+) binding site.

Belongs to the zinc-containing alcohol dehydrogenase family. Class-I subfamily. In terms of assembly, homodimer. Requires Zn(2+) as cofactor.

It localises to the cytoplasm. It catalyses the reaction a primary alcohol + NAD(+) = an aldehyde + NADH + H(+). The catalysed reaction is a secondary alcohol + NAD(+) = a ketone + NADH + H(+). The sequence is that of Alcohol dehydrogenase 1 (ADH1) from Geomys bursarius (Plains pocket gopher).